The sequence spans 192 residues: Ribosomal RNA small subunit methyltransferase G (192 aa).

Residues Gly-63, Leu-68, 112-113 (IE), and Arg-125 each bind S-adenosyl-L-methionine.

This sequence belongs to the methyltransferase superfamily. RNA methyltransferase RsmG family.

It localises to the cytoplasm. The catalysed reaction is guanosine(527) in 16S rRNA + S-adenosyl-L-methionine = N(7)-methylguanosine(527) in 16S rRNA + S-adenosyl-L-homocysteine. Functionally, specifically methylates the N7 position of guanine in position 527 of 16S rRNA. This chain is Ribosomal RNA small subunit methyltransferase G, found in Rickettsia africae (strain ESF-5).